The primary structure comprises 597 residues: MTINNRKSHLKDLDPGLMKDWEIAEKAEEFLKPSKMLAEELGLTEDEIIPHGKYVAKVDFAGVLTRLKDRPNGKYIDVTAITPTPLGEGKSTTTMGLVQGLGNLGKKVTGAIRQPSSGPTFNIKGSAAGGGRSQCLPLSPFTLGLTGDIDAVTNSHNLAMVALQARIQHEANNTDEFLSSRSLKRLDIDPARVELKWAIDFCAQSLREIIMGIGGKTDGYQMHSGFGISVSSEVMAILSVFTGLADLRERMSKIIVAYRQNGEPVTTADLEVDGAMTALLLRAVNPNLLQTIEGQPVFVHAGPFANIAIGQSSIVADRLALKLADYHVTESGFGADIGFEKFWNIKCRLSGLKPDCAVIVATVRALKMHGGGPKVTPGAPLDPAYTTPNAALVEKGCQNMLAHIQTVKTAGINPVVCINHFAADTAQEIDIIRRTAEQAGARVAVSYHWANGGEGAAELAEAVIDACNEPNDFHFLYPEDMPLRERIYTIARKVYGADGVSYTQTALEKLARLENTGNTQFMPSCMVKTHLSLSHDPALKGRPGGFTLPIRDILTYMGAGLVVPVAGDIKLMPGTSSDPNFRRIDIDTHTGKVKGLF.

84–91 is an ATP binding site; sequence TPLGEGKS.

It belongs to the formate--tetrahydrofolate ligase family.

The enzyme catalyses (6S)-5,6,7,8-tetrahydrofolate + formate + ATP = (6R)-10-formyltetrahydrofolate + ADP + phosphate. It functions in the pathway one-carbon metabolism; tetrahydrofolate interconversion. This chain is Formate--tetrahydrofolate ligase, found in Dehalococcoides mccartyi (strain ATCC BAA-2266 / KCTC 15142 / 195) (Dehalococcoides ethenogenes (strain 195)).